We begin with the raw amino-acid sequence, 62 residues long: Small EDRK-rich factor 1 (62 aa).

2 stretches are compositionally biased toward basic and acidic residues: residues 1-30 (MARGNQRELARQKNMKKSQEISKGKRKEDS) and 50-62 (AANERKSMQTREK). A disordered region spans residues 1-62 (MARGNQRELA…ERKSMQTREK (62 aa)).

This sequence belongs to the SERF family. As to quaternary structure, interacts with SNCA; this interaction promotes the aggregation of SNCA.

It is found in the cytoplasm. It localises to the cytosol. The protein localises to the nucleus. Functionally, positive regulator of amyloid protein aggregation and proteotoxicity. Induces conformational changes in amyloid proteins, such as APP, HTT, and SNCA, driving them into compact formations preceding the formation of aggregates. The chain is Small EDRK-rich factor 1 (SERF1) from Bos taurus (Bovine).